A 149-amino-acid polypeptide reads, in one-letter code: SsrA-binding protein (149 aa).

The protein belongs to the SmpB family.

The protein localises to the cytoplasm. Required for rescue of stalled ribosomes mediated by trans-translation. Binds to transfer-messenger RNA (tmRNA), required for stable association of tmRNA with ribosomes. tmRNA and SmpB together mimic tRNA shape, replacing the anticodon stem-loop with SmpB. tmRNA is encoded by the ssrA gene; the 2 termini fold to resemble tRNA(Ala) and it encodes a 'tag peptide', a short internal open reading frame. During trans-translation Ala-aminoacylated tmRNA acts like a tRNA, entering the A-site of stalled ribosomes, displacing the stalled mRNA. The ribosome then switches to translate the ORF on the tmRNA; the nascent peptide is terminated with the 'tag peptide' encoded by the tmRNA and targeted for degradation. The ribosome is freed to recommence translation, which seems to be the essential function of trans-translation. The polypeptide is SsrA-binding protein (Acholeplasma laidlawii (strain PG-8A)).